A 756-amino-acid polypeptide reads, in one-letter code: MTTSHILGFPRVGAKRELKFAQERYWRKELAEQDLLDLAKALREKNWKHQAAANADFVAVGDFTFYDHILDLQVATGAIPARFGFDSQNLTLDQYFQLARGNKDQFAIEMTKWFDTNYHYLVPEFQKSTAFKANPAHYVNQIREAKALGLNFKPVIVGPLTFLWLGKEKGEAFNRFDLLNQLVPVYVEILNALVAEGAEWIQIDEPALALDLPAEWVEAYKSVYAELSKVNAKLLLATYFGSVAEHAELLKALPVAGLHLDLVRAPEQLAAFEDYSKVLSAGVIEGRNIWRANLNKVLDVLEPLKAKLGERLWIAPSCSLLHTPFDLEVEVQLKEKNTALYSWLSFTLQKVEELNVLKQALNNGRASVQAALDASQAAADARATSKEIHRPEVAERLANLPKGADQRKSPFAERIVKQNAWLNLPLLPTTNIGSFPQTTEIRHARASFKKGELSLADYEAAMKKEIEYVVRRQEELDLDVLVHGEAERNDMVEYFGELLDGFAFTKFGWVQSYGSRCVKPPVIYGDVIRPEPMTVRWSQYAQSLTNRVMKGMLTGPVTILQWSFVRNDIPRSTVCKQIGVALSDEVLDLEAAGIKVIQIDEPAIREGLPLKRADWDAYLQWAGEAFRLSSMGVQDDTQIHTHMCYSEFNDILPAIAALDADVITIETSRSDMELLTAFADFKYPNDIGPGVYDIHSPRVPTATEVEHLLRKALNVIPKERLWVNPDCGLKTRGWTETIDQLKVMVDVTKKLRAELA.

5-methyltetrahydropteroyltri-L-glutamate contacts are provided by residues 16 to 19 (RELK) and K112. L-homocysteine-binding positions include 432 to 434 (IGS) and E485. L-methionine is bound by residues 432–434 (IGS) and E485. Residues 516–517 (RC) and W562 contribute to the 5-methyltetrahydropteroyltri-L-glutamate site. An L-homocysteine-binding site is contributed by D600. Residue D600 participates in L-methionine binding. Residue E606 coordinates 5-methyltetrahydropteroyltri-L-glutamate. 3 residues coordinate Zn(2+): H642, C644, and E666. Catalysis depends on H695, which acts as the Proton donor. C727 is a Zn(2+) binding site.

It belongs to the vitamin-B12 independent methionine synthase family. Zn(2+) serves as cofactor.

The enzyme catalyses 5-methyltetrahydropteroyltri-L-glutamate + L-homocysteine = tetrahydropteroyltri-L-glutamate + L-methionine. It functions in the pathway amino-acid biosynthesis; L-methionine biosynthesis via de novo pathway; L-methionine from L-homocysteine (MetE route): step 1/1. Functionally, catalyzes the transfer of a methyl group from 5-methyltetrahydrofolate to homocysteine resulting in methionine formation. The chain is 5-methyltetrahydropteroyltriglutamate--homocysteine methyltransferase from Haemophilus influenzae (strain PittGG).